We begin with the raw amino-acid sequence, 623 residues long: Glutathione import ATP-binding protein GsiA (623 aa).

2 consecutive ABC transporter domains span residues 15 to 269 and 314 to 564; these read VENL…RALL and LRVR…RKLL. ATP is bound by residues 49–56 and 357–364; these read GESGSGKS.

The protein belongs to the ABC transporter superfamily. Glutathione importer (TC 3.A.1.5.11) family. As to quaternary structure, the complex is composed of two ATP-binding proteins (GsiA), two transmembrane proteins (GsiC and GsiD) and a solute-binding protein (GsiB).

It localises to the cell inner membrane. It catalyses the reaction glutathione(out) + ATP + H2O = glutathione(in) + ADP + phosphate + H(+). Its function is as follows. Part of the ABC transporter complex GsiABCD involved in glutathione import. Responsible for energy coupling to the transport system. This is Glutathione import ATP-binding protein GsiA from Shigella boydii serotype 4 (strain Sb227).